We begin with the raw amino-acid sequence, 196 residues long: Dual-action ribosomal maturation protein DarP (196 aa).

It belongs to the DarP family.

Its subcellular location is the cytoplasm. Its function is as follows. Member of a network of 50S ribosomal subunit biogenesis factors which assembles along the 30S-50S interface, preventing incorrect 23S rRNA structures from forming. Promotes peptidyl transferase center (PTC) maturation. The protein is Dual-action ribosomal maturation protein DarP of Stenotrophomonas maltophilia (strain R551-3).